The primary structure comprises 335 residues: Avermitilol synthase (335 aa).

Mg(2+) is bound by residues aspartate 80, aspartate 84, asparagine 219, serine 223, and glutamate 227. The DDXXD motif signature appears at aspartate 80–aspartate 84.

This sequence belongs to the terpene synthase family. Requires Mg(2+) as cofactor.

The catalysed reaction is (2E,6E)-farnesyl diphosphate + H2O = avermitilol + diphosphate. Catalyzes the cyclization of farnesyl diphosphate to avermitilol. This is Avermitilol synthase (tpc1) from Streptomyces avermitilis (strain ATCC 31267 / DSM 46492 / JCM 5070 / NBRC 14893 / NCIMB 12804 / NRRL 8165 / MA-4680).